The sequence spans 245 residues: Phosphoribosylaminoimidazole-succinocarboxamide synthase (245 aa).

The protein belongs to the SAICAR synthetase family.

The catalysed reaction is 5-amino-1-(5-phospho-D-ribosyl)imidazole-4-carboxylate + L-aspartate + ATP = (2S)-2-[5-amino-1-(5-phospho-beta-D-ribosyl)imidazole-4-carboxamido]succinate + ADP + phosphate + 2 H(+). It functions in the pathway purine metabolism; IMP biosynthesis via de novo pathway; 5-amino-1-(5-phospho-D-ribosyl)imidazole-4-carboxamide from 5-amino-1-(5-phospho-D-ribosyl)imidazole-4-carboxylate: step 1/2. This Nostoc punctiforme (strain ATCC 29133 / PCC 73102) protein is Phosphoribosylaminoimidazole-succinocarboxamide synthase.